The following is a 1929-amino-acid chain: Myoferlin (1929 aa).

Residues 1–53 (MISYEPPPSAISNPTDPGGTTIIQGDGENDEEEDRDIVDAGFNPSVPGAPGQT) form a disordered region. Residues 27–36 (GENDEEEDRD) show a composition bias toward acidic residues. C2 domains lie at 62–179 (VKGK…RKWV) and 218–354 (EDDD…EEYD). Residues aspartate 267, aspartate 275, aspartate 323, aspartate 325, and aspartate 331 each coordinate Ca(2+). Positions 898 to 907 (RRLVRKRKKD) are enriched in basic residues. The disordered stretch occupies residues 898–918 (RRLVRKRKKDPKVSTTSKAAL). C2 domains are found at residues 996–1124 (GANT…LLWY), 1159–1283 (RAPQ…TKHE), 1408–1527 (IPYP…SHCG), and 1645–1793 (GPPG…EKCS). Ca(2+) is bound by residues aspartate 1028, aspartate 1034, aspartate 1090, and aspartate 1092. Positions 1442, 1448, 1497, 1499, 1764, 1767, and 1770 each coordinate Ca(2+). A compositionally biased stretch (basic and acidic residues) spans 1845–1858 (DAEERPAGKGRDEP). A disordered region spans residues 1845–1867 (DAEERPAGKGRDEPNMNPKLDPP). A helical transmembrane segment spans residues 1894-1914 (WVFIGLIILLLVLLFLGVFFY).

Belongs to the ferlin family. Ca(2+) is required as a cofactor.

The protein localises to the cell membrane. It is found in the nucleus membrane. It localises to the cytoplasmic vesicle membrane. May play a role in membrane regeneration and repair. The sequence is that of Myoferlin (myof) from Xenopus tropicalis (Western clawed frog).